The chain runs to 254 residues: MARRRQLYEGKAKILFEGPEPGTLVQYFKDDATAFNAQKKGVITGKGVLNNRISEFLMQRLGEIGIPTHFVRRLNMREQLVREVEIIPIEVVIRNVAAGSMSTRLGIPEGTRLPRSIIEYYYKNDALNDPMVSEDHITAFGWASTQDMDDIVHLSLRINDFLTGLFLGVGIVLVDFKIEFGRLWENDDMRIVLADEISPDNCRLWDAKTNEKMDKDRFRRDLGRVEEAYQEVAKRLGILPEAGTRDMKGPETMQ.

The protein belongs to the SAICAR synthetase family.

It carries out the reaction 5-amino-1-(5-phospho-D-ribosyl)imidazole-4-carboxylate + L-aspartate + ATP = (2S)-2-[5-amino-1-(5-phospho-beta-D-ribosyl)imidazole-4-carboxamido]succinate + ADP + phosphate + 2 H(+). It participates in purine metabolism; IMP biosynthesis via de novo pathway; 5-amino-1-(5-phospho-D-ribosyl)imidazole-4-carboxamide from 5-amino-1-(5-phospho-D-ribosyl)imidazole-4-carboxylate: step 1/2. This Acidiphilium cryptum (strain JF-5) protein is Phosphoribosylaminoimidazole-succinocarboxamide synthase.